Here is a 406-residue protein sequence, read N- to C-terminus: MAPELSSNWKKLQEKLKAPQPTKSAPISQEAAFKQAISKKSISSETLKRKAEESQQQQQASNPSKKPKRQKSQTQSQPSSQKPTEEKMGGNVQSKPTTSSSPNSTLPSLHLWADEQGISSESLAEAYNLGLRGTSSSSSSSHIPLLSTLPPAIPNAGLTLPGHSSSSPKSNKNGLPLPTDLPSSLTLSNGLTLDTSTTTDLALILQATKSNTLGKYLSIDCEMVGTGPSGATSVLARCSIVDFHGHQIYDSYVRPTAFVTDWRTHVSGISKRHMASARSFESVQATVAALLKGRILVGHDVKHDLEVLGFEHPHRDIRDTAKYSGFRKYGHGPKPSLRVLAKEVLGIEIHQGQHSSVEDARVAMLLFRKEKHGFDMENSNRYEEGQAKKGGNGGGGGGGKKKKGKK.

The segment covering 1–10 (MAPELSSNWK) has biased composition (polar residues). Disordered regions lie at residues 1–108 (MAPE…TLPS) and 156–181 (AGLTLPGHSSSSPKSNKNGLPLPTDL). Composition is skewed to low complexity over residues 54-64 (SQQQQQASNPS), 72-82 (SQTQSQPSSQK), and 94-108 (SKPTTSSSPNSTLPS). Residues 162–173 (GHSSSSPKSNKN) are compositionally biased toward polar residues. Residues 216 to 367 (YLSIDCEMVG…EDARVAMLLF (152 aa)) form the Exonuclease domain. The span at 377–387 (ENSNRYEEGQA) shows a compositional bias: basic and acidic residues. A disordered region spans residues 377-406 (ENSNRYEEGQAKKGGNGGGGGGGKKKKGKK). A compositionally biased stretch (gly residues) spans 388–398 (KKGGNGGGGGG).

It belongs to the REXO4 family.

The protein localises to the nucleus. Its function is as follows. Exoribonuclease involved in ribosome biosynthesis. Involved in the processing of ITS1, the internal transcribed spacer localized between the 18S and 5.8S rRNAs. This is RNA exonuclease 4 (rex-4) from Neurospora crassa (strain ATCC 24698 / 74-OR23-1A / CBS 708.71 / DSM 1257 / FGSC 987).